The sequence spans 538 residues: Putative outer membrane porin BglH (538 aa).

Positions 1–25 are cleaved as a signal peptide; the sequence is MFRRNLITSAILLMAPLAFSAQSLA. Residues 52 to 82 form a disordered region; sequence KDEEKKKYTPATVNRSVSTNDQGYAANPFPT. The span at 62-73 shows a compositional bias: polar residues; it reads ATVNRSVSTNDQ.

The protein belongs to the porin LamB (TC 1.B.3) family.

It is found in the cell outer membrane. Functionally, may be a sugar porin with a broad carbohydrate specificity. This Shigella flexneri serotype 5b (strain 8401) protein is Putative outer membrane porin BglH (bglH).